A 185-amino-acid polypeptide reads, in one-letter code: Ribosome-recycling factor (185 aa).

This sequence belongs to the RRF family.

Its subcellular location is the cytoplasm. Its function is as follows. Responsible for the release of ribosomes from messenger RNA at the termination of protein biosynthesis. May increase the efficiency of translation by recycling ribosomes from one round of translation to another. This Streptococcus mutans serotype c (strain ATCC 700610 / UA159) protein is Ribosome-recycling factor.